Reading from the N-terminus, the 116-residue chain is Ribonuclease P protein component (116 aa).

This sequence belongs to the RnpA family. In terms of assembly, consists of a catalytic RNA component (M1 or rnpB) and a protein subunit.

The catalysed reaction is Endonucleolytic cleavage of RNA, removing 5'-extranucleotides from tRNA precursor.. Its function is as follows. RNaseP catalyzes the removal of the 5'-leader sequence from pre-tRNA to produce the mature 5'-terminus. It can also cleave other RNA substrates such as 4.5S RNA. The protein component plays an auxiliary but essential role in vivo by binding to the 5'-leader sequence and broadening the substrate specificity of the ribozyme. This is Ribonuclease P protein component from Lachnoclostridium phytofermentans (strain ATCC 700394 / DSM 18823 / ISDg) (Clostridium phytofermentans).